Here is a 286-residue protein sequence, read N- to C-terminus: MADNPLWHETLHDHFGQYFSVDNVLYHEKTDHQDLIIFDNRAFGRVMALDGVVQTTERDEFIYHEMMTHVPLLAHGNAKHVLIIGGGDGAMLREVSRHRSIETITMVEIDAGVVSFCRQYLPNHNAGAYDDPRFTLVIDDGVNFVNQTTQTFDVIISDCTDPIGPGESLFTSAFYEGCKRCLNPGGIFVAQNGVCFLQQDEAVGSHRKLSHYFRDVSFYQAAIPTYYGGIMTFAWASDNEALRHLSSEIIQARFHKANLTCRYYNPAIHTAAFALPQYLHDALSAP.

Residues 5 to 238 (PLWHETLHDH…GIMTFAWASD (234 aa)) form the PABS domain. Residue glutamine 33 participates in S-methyl-5'-thioadenosine binding. Spermidine is bound by residues histidine 64 and aspartate 88. S-methyl-5'-thioadenosine is bound by residues glutamate 108 and 140-141 (DG). Aspartate 158 serves as the catalytic Proton acceptor. Residue 158-161 (DCTD) participates in spermidine binding. Proline 165 serves as a coordination point for S-methyl-5'-thioadenosine.

The protein belongs to the spermidine/spermine synthase family. As to quaternary structure, homodimer or homotetramer.

The protein resides in the cytoplasm. The catalysed reaction is S-adenosyl 3-(methylsulfanyl)propylamine + putrescine = S-methyl-5'-thioadenosine + spermidine + H(+). The protein operates within amine and polyamine biosynthesis; spermidine biosynthesis; spermidine from putrescine: step 1/1. In terms of biological role, catalyzes the irreversible transfer of a propylamine group from the amino donor S-adenosylmethioninamine (decarboxy-AdoMet) to putrescine (1,4-diaminobutane) to yield spermidine. The chain is Polyamine aminopropyltransferase from Klebsiella pneumoniae subsp. pneumoniae (strain ATCC 700721 / MGH 78578).